Here is a 467-residue protein sequence, read N- to C-terminus: Calcium-binding protein P (467 aa).

2 stretches are compositionally biased toward pro residues: residues 1-10 (MQNPQNPPPA) and 45-62 (QYPP…PPYP). A disordered region spans residues 1 to 311 (MQNPQNPPPA…GAYPGQPPMG (311 aa)). An XYPPX motif is present at residues 45–49 (QYPPQ). Low complexity predominate over residues 63-74 (GTQQPGAPGAPG). Short sequence motifs (XYPPX) lie at residues 75–79 (QYPPQ), 83–87 (QYPPQ), 94–98 (QYPPQ), 104–108 (GYPPQ), 115–119 (QYPPQ), 125–129 (GYPPQ), 136–140 (QYPPQ), 146–150 (QYPPQ), 157–161 (QYPPQ), 165–169 (QYPPQ), 176–180 (AYPPQ), 187–191 (AYPPQ), 221–225 (GVPPQ), 238–242 (AYPPQ), 247–251 (AYPPQ), 256–260 (AYPPQ), and 275–279 (AYPPQ). Composition is skewed to pro residues over residues 75–109 (QYPP…PPQQ) and 118–131 (PQQP…PQQP). A compositionally biased stretch (low complexity) spans 132–145 (GAPGQYPPQQGQPG). 2 stretches are compositionally biased toward low complexity: residues 153 to 193 (GQPG…PQQG) and 215 to 246 (AYPG…GQPG). Low complexity predominate over residues 253–311 (QPGAYPPQQQQVAYPGQQPPMGAYPPQQGAYPGQQGAYPGQQGAYPGQQGAYPGQPPMG). 2 consecutive EF-hand domains span residues 399-434 (QKMM…LGYY) and 435-467 (FSKG…WSMQ). Positions 412, 414, 416, 418, and 423 each coordinate Ca(2+).

The sequence is that of Calcium-binding protein P (cbpP) from Dictyostelium discoideum (Social amoeba).